A 470-amino-acid polypeptide reads, in one-letter code: tRNA (guanine(37)-N(1))-methyltransferase (470 aa).

S-adenosyl-L-methionine-binding positions include 304–305 (DL), 332–333 (DG), and Asn-370.

The protein belongs to the class I-like SAM-binding methyltransferase superfamily. TRM5/TYW2 family. As to quaternary structure, monomer.

The protein localises to the mitochondrion matrix. It localises to the nucleus. It is found in the cytoplasm. It carries out the reaction guanosine(37) in tRNA + S-adenosyl-L-methionine = N(1)-methylguanosine(37) in tRNA + S-adenosyl-L-homocysteine + H(+). Specifically methylates the N1 position of guanosine-37 in various cytoplasmic and mitochondrial tRNAs. Methylation is not dependent on the nature of the nucleoside 5' of the target nucleoside. This is the first step in the biosynthesis of wybutosine (yW), a modified base adjacent to the anticodon of tRNAs and required for accurate decoding. The polypeptide is tRNA (guanine(37)-N(1))-methyltransferase (Theileria parva (East coast fever infection agent)).